Reading from the N-terminus, the 566-residue chain is Beta,beta-carotene 15,15'-dioxygenase (566 aa).

Fe cation is bound by residues His-172, His-237, His-308, and His-514. Positions 529–566 (TPAKTQEDENSDHPTGLTAPGLGHGENDFTAGHGGKSL) are disordered.

The protein belongs to the carotenoid oxygenase family. Fe(2+) serves as cofactor.

The protein resides in the cytoplasm. It is found in the cytosol. It carries out the reaction all-trans-beta-carotene + O2 = 2 all-trans-retinal. It functions in the pathway cofactor metabolism; retinol metabolism. In terms of biological role, symmetrically cleaves beta-carotene into two molecules of retinal using a dioxygenase mechanism. In Rattus norvegicus (Rat), this protein is Beta,beta-carotene 15,15'-dioxygenase.